The chain runs to 293 residues: AKT-interacting protein (293 aa).

A compositionally biased stretch (polar residues) spans 1-11; that stretch reads MNPFWSMSTNA. Residues 1–44 are disordered; sequence MNPFWSMSTNAGRKRSDGEEQSGSGEQRASPARPPFGKKQLPSI. Residues 75–223 form the UBC core domain; sequence YLEYSLLAEF…VVDSVKLCNS (149 aa). The segment at 260 to 293 is disordered; that stretch reads RPEDFNKGLPVSGLSWVKPGSTQPFSKEDNPLQT.

It belongs to the ubiquitin-conjugating enzyme family. FTS subfamily.

The protein resides in the cytoplasm. It localises to the cell membrane. In terms of biological role, may function to promote vesicle trafficking and/or fusion. May also regulate apoptosis. This Danio rerio (Zebrafish) protein is AKT-interacting protein (aktip).